The chain runs to 309 residues: Probable cell division protein WhiA (309 aa).

Positions 275-309 (SLKELGELVPGGPISKSGINHRLRKINQYAEKLRA) form a DNA-binding region, H-T-H motif.

Belongs to the WhiA family.

Functionally, involved in cell division and chromosome segregation. The polypeptide is Probable cell division protein WhiA (Pediococcus pentosaceus (strain ATCC 25745 / CCUG 21536 / LMG 10740 / 183-1w)).